Reading from the N-terminus, the 586-residue chain is Beta-fructofuranosidase, insoluble isoenzyme 3 (586 aa).

The N-terminal stretch at 1–26 (MATARARAALVFVALLQMAAVVVVRA) is a signal peptide. Residue aspartate 61 is part of the active site. N-linked (GlcNAc...) asparagine glycosylation is found at asparagine 154, asparagine 179, asparagine 341, asparagine 390, and asparagine 479.

It belongs to the glycosyl hydrolase 32 family.

Its subcellular location is the secreted. The protein resides in the extracellular space. The protein localises to the apoplast. It is found in the cell wall. It carries out the reaction Hydrolysis of terminal non-reducing beta-D-fructofuranoside residues in beta-D-fructofuranosides.. This Oryza sativa subsp. indica (Rice) protein is Beta-fructofuranosidase, insoluble isoenzyme 3 (CIN3).